The sequence spans 156 residues: Large ribosomal subunit protein uL15 (156 aa).

Positions 1–16 are enriched in basic residues; it reads MVRRFKRAVKYRRGSR. The disordered stretch occupies residues 1–35; the sequence is MVRRFKRAVKYRRGSRTHGWGRVGQHRKSGGSGGK.

The protein belongs to the universal ribosomal protein uL15 family. Part of the 50S ribosomal subunit.

Binds to the 23S rRNA. This chain is Large ribosomal subunit protein uL15, found in Pyrobaculum neutrophilum (strain DSM 2338 / JCM 9278 / NBRC 100436 / V24Sta) (Thermoproteus neutrophilus).